The primary structure comprises 418 residues: Torsin-4A-B (418 aa).

Residues 128–144 (CLLLFVGIVCFQIFNAI) traverse the membrane as a helical segment. Position 200–207 (200–207 (GPSGVGKS)) interacts with ATP.

Belongs to the ClpA/ClpB family. Torsin subfamily.

The protein resides in the membrane. This Xenopus laevis (African clawed frog) protein is Torsin-4A-B (tor4a-b).